The sequence spans 202 residues: Probable chemoreceptor glutamine deamidase CheD (202 aa).

This sequence belongs to the CheD family.

The enzyme catalyses L-glutaminyl-[protein] + H2O = L-glutamyl-[protein] + NH4(+). Its function is as follows. Probably deamidates glutamine residues to glutamate on methyl-accepting chemotaxis receptors (MCPs), playing an important role in chemotaxis. This is Probable chemoreceptor glutamine deamidase CheD from Thiobacillus denitrificans (strain ATCC 25259 / T1).